The sequence spans 385 residues: Glucans biosynthesis protein C (385 aa).

10 helical membrane passes run 17 to 37 (AWLM…SHTW), 60 to 80 (MQVF…RYPL), 91 to 111 (VGIP…IMLQ), 137 to 157 (ISHL…VWIF), 173 to 193 (KFSM…YAVI), 212 to 232 (FIVM…LAFI), 239 to 259 (LFTT…VAYL), 274 to 294 (TESV…FSFG), 311 to 331 (ASLF…AYIT), and 338 to 358 (WLGF…LYEI).

It belongs to the acyltransferase 3 family. OpgC subfamily.

It localises to the cell membrane. It functions in the pathway glycan metabolism; osmoregulated periplasmic glucan (OPG) biosynthesis. In terms of biological role, necessary for the succinyl substitution of periplasmic glucans. Could catalyze the transfer of succinyl residues from the cytoplasmic side of the membrane to the nascent glucan backbones on the periplasmic side of the membrane. This Escherichia coli O139:H28 (strain E24377A / ETEC) protein is Glucans biosynthesis protein C.